Reading from the N-terminus, the 119-residue chain is Autophagy-related protein 8 (119 aa).

Gly116 carries the Phosphatidylethanolamine amidated glycine lipid modification. A propeptide spans 117 to 119 (removed in mature form); it reads EAL.

This sequence belongs to the ATG8 family. In terms of assembly, conjugation to phosphatidylethanolamine (PE) leads to homodimerization. Interacts with ATG1, ATG3, ATG4, ATG7 and ATG12. In terms of processing, the C-terminal Glu-117, Ala-118 and Leu-119 residues of ATG8 are removed by ATG4 to expose Gly-116 at the C-terminus. This Gly-116 forms then a thioester bond with ATG7 (E1-like activating enzyme) before being transferred to ATG3 (the specific E2 conjugating enzyme), in order to be finally amidated with phosphatidylethanolamine. This lipid modification anchors ATG8 to membranes and can be reversed by ATG4, releasing soluble ATG8.

It localises to the cytoplasmic vesicle. The protein localises to the cvt vesicle membrane. Its subcellular location is the autophagosome membrane. The protein resides in the vacuole membrane. Functionally, ubiquitin-like modifier involved in cytoplasm to vacuole transport (Cvt) vesicles and autophagosome formation. With ATG4, mediates the delivery of the vesicles and autophagosomes to the vacuole via the microtubule cytoskeleton. Required for selective autophagic degradation of the nucleus (nucleophagy) as well as for mitophagy which contributes to regulate mitochondrial quantity and quality by eliminating the mitochondria to a basal level to fulfill cellular energy requirements and preventing excess ROS production. Also participates in membrane fusion events that take place in the early secretory pathway. Also involved in endoplasmic reticulum-specific autophagic process and is essential for the survival of cells subjected to severe ER stress. The ATG8-PE conjugate mediates tethering between adjacent membranes and stimulates membrane hemifusion, leading to expansion of the autophagosomal membrane during autophagy. Moreover not only conjugation, but also subsequent ATG8-PE deconjugation is an important step required to facilitate multiple events during macroautophagy, and especially for efficient autophagosome biogenesis, the assembly of ATG9-containing tubulovesicular clusters into phagophores/autophagosomes, and for the disassembly of PAS-associated ATG components. Autophagy is required for conidiation, aerial mycelial growth, and pseudothecia formation, but not for host invasion. The polypeptide is Autophagy-related protein 8 (Cochliobolus heterostrophus (strain C4 / ATCC 48331 / race T) (Southern corn leaf blight fungus)).